Here is a 530-residue protein sequence, read N- to C-terminus: Bifunctional purine biosynthesis protein PurH (530 aa).

In terms of domain architecture, MGS-like spans 1-148 (MNNPRPIRRA…KNHKDVTIVV (148 aa)).

This sequence belongs to the PurH family.

The catalysed reaction is (6R)-10-formyltetrahydrofolate + 5-amino-1-(5-phospho-beta-D-ribosyl)imidazole-4-carboxamide = 5-formamido-1-(5-phospho-D-ribosyl)imidazole-4-carboxamide + (6S)-5,6,7,8-tetrahydrofolate. It catalyses the reaction IMP + H2O = 5-formamido-1-(5-phospho-D-ribosyl)imidazole-4-carboxamide. It participates in purine metabolism; IMP biosynthesis via de novo pathway; 5-formamido-1-(5-phospho-D-ribosyl)imidazole-4-carboxamide from 5-amino-1-(5-phospho-D-ribosyl)imidazole-4-carboxamide (10-formyl THF route): step 1/1. It functions in the pathway purine metabolism; IMP biosynthesis via de novo pathway; IMP from 5-formamido-1-(5-phospho-D-ribosyl)imidazole-4-carboxamide: step 1/1. The polypeptide is Bifunctional purine biosynthesis protein PurH (Aliivibrio salmonicida (strain LFI1238) (Vibrio salmonicida (strain LFI1238))).